The primary structure comprises 312 residues: tRNA dimethylallyltransferase (312 aa).

19-26 (GPSGSGKS) contacts ATP. A substrate-binding site is contributed by 21–26 (SGSGKS). The tract at residues 44–47 (DSLS) is interaction with substrate tRNA.

This sequence belongs to the IPP transferase family. Monomer. Mg(2+) serves as cofactor.

The enzyme catalyses adenosine(37) in tRNA + dimethylallyl diphosphate = N(6)-dimethylallyladenosine(37) in tRNA + diphosphate. Functionally, catalyzes the transfer of a dimethylallyl group onto the adenine at position 37 in tRNAs that read codons beginning with uridine, leading to the formation of N6-(dimethylallyl)adenosine (i(6)A). The chain is tRNA dimethylallyltransferase from Helicobacter pylori (strain J99 / ATCC 700824) (Campylobacter pylori J99).